Consider the following 81-residue polypeptide: Protein RALF-like 6 (81 aa).

The first 29 residues, 1–29 (MAAHKKSHIRIFFVSVMIILSLFSGFGEG), serve as a signal peptide directing secretion. 2 cysteine pairs are disulfide-bonded: cysteine 46/cysteine 54 and cysteine 66/cysteine 72.

This sequence belongs to the plant rapid alkalinization factor (RALF) family.

The protein resides in the secreted. Its function is as follows. Cell signaling peptide that may regulate plant stress, growth, and development. Mediates a rapid alkalinization of extracellular space by mediating a transient increase in the cytoplasmic Ca(2+) concentration leading to a calcium-dependent signaling events through a cell surface receptor and a concomitant activation of some intracellular mitogen-activated protein kinases. The polypeptide is Protein RALF-like 6 (RALFL6) (Arabidopsis thaliana (Mouse-ear cress)).